We begin with the raw amino-acid sequence, 491 residues long: Delayed-rectifier potassium channel regulatory subunit KCNS3 (491 aa).

Residues 1–182 lie on the Cytoplasmic side of the membrane; the sequence is MVFGEFFHRP…IRMENPAYCL (182 aa). Residues 183–204 traverse the membrane as a helical segment; it reads SAKLIAISSLSVVLASIVAMCV. The Extracellular segment spans residues 205-220; that stretch reads HSMSEFQNEDGEVDDP. A helical transmembrane segment spans residues 221–243; it reads VLEGVEIACIAWFTGELAVRLVA. Over 244-254 the chain is Cytoplasmic; that stretch reads APCQKKFWKNP. A helical transmembrane segment spans residues 255–275; the sequence is LNIIDFVSIIPFYATLAVDTK. Topologically, residues 276–285 are extracellular; the sequence is EEESEDIENM. A helical; Voltage-sensor membrane pass occupies residues 286-306; sequence GKVVQILRLMRIFRILKLARH. Residues 307–321 lie on the Cytoplasmic side of the membrane; sequence SVGLRSLGATLRHSY. A helical membrane pass occupies residues 322–343; that stretch reads HEVGLLLLFLSVGISIFSVLIY. Over 344–357 the chain is Extracellular; it reads SVEKDDHTSSLTSI. Residues 358 to 369 constitute an intramembrane region (helical); sequence PICWWWATISMT. Residues 370–375 carry the Selectivity filter motif; that stretch reads TVGYGD. Residues 370–377 lie within the membrane without spanning it; it reads TVGYGDTH. Residues 378–384 lie on the Extracellular side of the membrane; that stretch reads PVTLAGK. Residues 385 to 413 form a helical membrane-spanning segment; that stretch reads LIASTCIICGILVVALPITIIFNKFSKYY. The Cytoplasmic segment spans residues 414-491; that stretch reads QKQKDIDVDQ…TASLENCTAK (78 aa).

It belongs to the potassium channel family. S (TC 1.A.1.2) subfamily. Kv9.3/KCNS3 sub-subfamily. In terms of assembly, heterotetramer with KCNB1. Does not form homomultimers.

The protein localises to the cell membrane. Functionally, potassium channel regulatory subunit that modulates the delayed rectifier potassium channel activity of KCNB1 by namely slowing down the deactivation and inactivation time constants. While it does not form functional channel on its own, it can form functional heterotetrameric channels with KCNB1. The polypeptide is Delayed-rectifier potassium channel regulatory subunit KCNS3 (Oryctolagus cuniculus (Rabbit)).